Consider the following 182-residue polypeptide: Ribosome-recycling factor (182 aa).

The protein belongs to the RRF family.

It localises to the cytoplasm. Functionally, responsible for the release of ribosomes from messenger RNA at the termination of protein biosynthesis. May increase the efficiency of translation by recycling ribosomes from one round of translation to another. The polypeptide is Ribosome-recycling factor (Prochlorococcus marinus subsp. pastoris (strain CCMP1986 / NIES-2087 / MED4)).